Here is a 450-residue protein sequence, read N- to C-terminus: Tubulin alpha-6 chain (450 aa).

Positions 11, 71, 144, 145, 179, 206, and 228 each coordinate GTP. Glu71 is a binding site for Mg(2+). Glu254 is an active-site residue. Thr349 carries the phosphothreonine modification. A disordered region spans residues Lys430–Tyr450. Residues Asp431–Tyr450 show a composition bias toward acidic residues.

It belongs to the tubulin family. As to quaternary structure, dimer of alpha and beta chains. A typical microtubule is a hollow water-filled tube with an outer diameter of 25 nm and an inner diameter of 15 nM. Alpha-beta heterodimers associate head-to-tail to form protofilaments running lengthwise along the microtubule wall with the beta-tubulin subunit facing the microtubule plus end conferring a structural polarity. Microtubules usually have 13 protofilaments but different protofilament numbers can be found in some organisms and specialized cells. Interacts with TFCB. Requires Mg(2+) as cofactor. Undergoes a tyrosination/detyrosination cycle, the cyclic removal and re-addition of a C-terminal tyrosine residue by the enzymes tubulin tyrosine carboxypeptidase (TTCP) and tubulin tyrosine ligase (TTL), respectively. Post-translationally, acetylation of alpha chains at Lys-40 stabilizes microtubules and affects affinity and processivity of microtubule motors. This modification has a role in multiple cellular functions, ranging from cell motility, cell cycle progression or cell differentiation to intracellular trafficking and signaling.

The protein resides in the cytoplasm. It localises to the cytoskeleton. The catalysed reaction is GTP + H2O = GDP + phosphate + H(+). In terms of biological role, tubulin is the major constituent of microtubules, a cylinder consisting of laterally associated linear protofilaments composed of alpha- and beta-tubulin heterodimers. Microtubules grow by the addition of GTP-tubulin dimers to the microtubule end, where a stabilizing cap forms. Below the cap, tubulin dimers are in GDP-bound state, owing to GTPase activity of alpha-tubulin. The sequence is that of Tubulin alpha-6 chain (TUBA6) from Arabidopsis thaliana (Mouse-ear cress).